We begin with the raw amino-acid sequence, 318 residues long: Olfactory receptor 5G25 (318 aa).

Residues Met-1–Ile-25 lie on the Extracellular side of the membrane. Asn-5 carries N-linked (GlcNAc...) asparagine glycosylation. The chain crosses the membrane as a helical span at residues Val-26–Ile-46. Residues Ile-47 to Arg-54 are Cytoplasmic-facing. Residues Leu-55 to Ser-75 traverse the membrane as a helical segment. The Extracellular portion of the chain corresponds to Val-76–Ile-99. A disulfide bond links Cys-97 and Cys-189. The helical transmembrane segment at Gln-100–Tyr-120 threads the bilayer. Residues Asp-121–Thr-133 are Cytoplasmic-facing. A helical transmembrane segment spans residues Leu-134–Ile-154. Residues Ser-155–Lys-196 lie on the Extracellular side of the membrane. The helical transmembrane segment at His-197–Ser-217 threads the bilayer. Residues Tyr-218–Ala-237 are Cytoplasmic-facing. A helical membrane pass occupies residues Phe-238–Ile-258. Topologically, residues Tyr-259 to Asn-271 are extracellular. A helical transmembrane segment spans residues Lys-272–Leu-292. At Arg-293–Leu-318 the chain is on the cytoplasmic side.

The protein belongs to the G-protein coupled receptor 1 family.

The protein localises to the cell membrane. Potential odorant receptor. In Mus musculus (Mouse), this protein is Olfactory receptor 5G25.